The chain runs to 281 residues: MKSKTHLGHTARKRFGQNFLHDNNIIQNIVMAIYPQKEQFLVEIGPGLGALTEPVAEKVERLTVIELDRDLAERLRHHPFLHQKLNVIEYDAMQFNFEQLYIDENLAEKNQKLRVFGNLPYNISTPLMFHLFKYHAIIQDMHFMLQKEVVKRLCAAPNSKAYGRLTIMAQYFCQVLPVLEVPPTAFKPAPKVESAVVRLIPHKELPYPVKDLYWLNRVTTQAFNQRRKTLRNALSTLFSAEKLTALAIDLEARAENLSIADYARLANYLADNPPTEDLQSE.

The S-adenosyl-L-methionine site is built by Asn18, Leu20, Gly45, Glu66, Asp91, and Asn118.

Belongs to the class I-like SAM-binding methyltransferase superfamily. rRNA adenine N(6)-methyltransferase family. RsmA subfamily.

The protein resides in the cytoplasm. It catalyses the reaction adenosine(1518)/adenosine(1519) in 16S rRNA + 4 S-adenosyl-L-methionine = N(6)-dimethyladenosine(1518)/N(6)-dimethyladenosine(1519) in 16S rRNA + 4 S-adenosyl-L-homocysteine + 4 H(+). In terms of biological role, specifically dimethylates two adjacent adenosines (A1518 and A1519) in the loop of a conserved hairpin near the 3'-end of 16S rRNA in the 30S particle. May play a critical role in biogenesis of 30S subunits. This chain is Ribosomal RNA small subunit methyltransferase A, found in Histophilus somni (strain 129Pt) (Haemophilus somnus).